A 249-amino-acid chain; its full sequence is MEELILGIVQGLTEFLPISSSGHLAIFTAIFNSTPDVGYFAFLHLATFLAVLIFVKSEVFEIINGISKKDKEYINLASKLVLSTIPAVFVGLFFGDFIESVFSSTYLIGIFLSITGILMLLSDKLNKNLKTIKSIPYFDALIVGVFQAFSVLPGISRSGTTLFAALFLGMKKEDAVKYSFLMSLPVTFGAGILELHNVAFSTEQIFGFVISFLTGLLGLYLVKRMVIGGKLKIFGYYCFLASFFVLTFL.

Helical transmembrane passes span 11–31, 35–55, 80–100, 101–121, 135–155, 180–200, 202–222, and 226–246; these read GLTE…TAIF, PDVG…LIFV, LVLS…FIES, VFSS…LMLL, IPYF…LPGI, FLMS…NVAF, TEQI…LYLV, and VIGG…FFVL.

Belongs to the UppP family.

The protein resides in the cell membrane. It carries out the reaction di-trans,octa-cis-undecaprenyl diphosphate + H2O = di-trans,octa-cis-undecaprenyl phosphate + phosphate + H(+). Its function is as follows. Catalyzes the dephosphorylation of undecaprenyl diphosphate (UPP). This chain is Undecaprenyl-diphosphatase, found in Methanococcus maripaludis (strain C7 / ATCC BAA-1331).